We begin with the raw amino-acid sequence, 490 residues long: Glutathione hydrolase 6 (490 aa).

Residues 1-52 are Cytoplasmic-facing; it reads MEPEAGPVLYQKLRVWEPSLESEEEEEEISEQLILDASGPHDSSGNKAGRLP. Residues 53-73 traverse the membrane as a helical; Signal-anchor for type II membrane protein segment; sequence GAWAQLVAALLLLAIGFSLAV. The Extracellular segment spans residues 74 to 490; that stretch reads RQLCSSGASP…PSGCCPFQGF (417 aa). Residues Asn160, Asn165, and Asn374 are each glycosylated (N-linked (GlcNAc...) asparagine).

It belongs to the gamma-glutamyltransferase family. In terms of assembly, heterodimer composed of the light and heavy chains. The active site is located in the light chain. In terms of processing, cleaved by autocatalysis into a large and a small subunit and the autocatalytic cleavage is essential to the functional activation of the enzyme.

The protein localises to the membrane. It catalyses the reaction an N-terminal (5-L-glutamyl)-[peptide] + an alpha-amino acid = 5-L-glutamyl amino acid + an N-terminal L-alpha-aminoacyl-[peptide]. The catalysed reaction is glutathione + H2O = L-cysteinylglycine + L-glutamate. The enzyme catalyses an S-substituted glutathione + H2O = an S-substituted L-cysteinylglycine + L-glutamate. The protein operates within sulfur metabolism; glutathione metabolism. Functionally, hydrolyzes and transfers gamma-glutamyl moieties from glutathione and other gamma-glutamyl compounds to acceptors. The sequence is that of Glutathione hydrolase 6 from Bos taurus (Bovine).